A 766-amino-acid polypeptide reads, in one-letter code: 5-methyltetrahydropteroyltriglutamate--homocysteine methyltransferase (766 aa).

Residues 23-26 (RELK) and Lys121 each bind 5-methyltetrahydropteroyltri-L-glutamate. L-homocysteine contacts are provided by residues 438–440 (IGS) and Glu491. Residues 438 to 440 (IGS) and Glu491 contribute to the L-methionine site. 5-methyltetrahydropteroyltri-L-glutamate is bound by residues 522–523 (RC) and Trp568. L-homocysteine is bound at residue Asp606. Asp606 lines the L-methionine pocket. Glu612 contacts 5-methyltetrahydropteroyltri-L-glutamate. 3 residues coordinate Zn(2+): His648, Cys650, and Glu672. Catalysis depends on His701, which acts as the Proton donor. Cys733 provides a ligand contact to Zn(2+).

The protein belongs to the vitamin-B12 independent methionine synthase family. Zn(2+) is required as a cofactor.

It carries out the reaction 5-methyltetrahydropteroyltri-L-glutamate + L-homocysteine = tetrahydropteroyltri-L-glutamate + L-methionine. It participates in amino-acid biosynthesis; L-methionine biosynthesis via de novo pathway; L-methionine from L-homocysteine (MetE route): step 1/1. Functionally, catalyzes the transfer of a methyl group from 5-methyltetrahydrofolate to homocysteine resulting in methionine formation. This is 5-methyltetrahydropteroyltriglutamate--homocysteine methyltransferase from Photobacterium profundum (strain SS9).